We begin with the raw amino-acid sequence, 210 residues long: Proteasome subunit beta (210 aa).

A propeptide spans 1–9 (MNDKNTLKG) (removed in mature form; by autocatalysis). The active-site Nucleophile is the threonine 10.

Belongs to the peptidase T1B family. As to quaternary structure, the 20S proteasome core is composed of 14 alpha and 14 beta subunits that assemble into four stacked heptameric rings, resulting in a barrel-shaped structure. The two inner rings, each composed of seven catalytic beta subunits, are sandwiched by two outer rings, each composed of seven alpha subunits. The catalytic chamber with the active sites is on the inside of the barrel. Has a gated structure, the ends of the cylinder being occluded by the N-termini of the alpha-subunits. Is capped at one or both ends by the proteasome regulatory ATPase, PAN.

The protein resides in the cytoplasm. The enzyme catalyses Cleavage of peptide bonds with very broad specificity.. Its activity is regulated as follows. The formation of the proteasomal ATPase PAN-20S proteasome complex, via the docking of the C-termini of PAN into the intersubunit pockets in the alpha-rings, triggers opening of the gate for substrate entry. Interconversion between the open-gate and close-gate conformations leads to a dynamic regulation of the 20S proteasome proteolysis activity. In terms of biological role, component of the proteasome core, a large protease complex with broad specificity involved in protein degradation. The sequence is that of Proteasome subunit beta from Methanothermobacter thermautotrophicus (strain ATCC 29096 / DSM 1053 / JCM 10044 / NBRC 100330 / Delta H) (Methanobacterium thermoautotrophicum).